The sequence spans 721 residues: Choline O-acetyltransferase (721 aa).

The Proton acceptor role is filled by His-419. CoA-binding positions include 496-508, Ser-534, and Gln-656; that span reads GKTF…VSPD.

Belongs to the carnitine/choline acetyltransferase family. As to quaternary structure, the 54 kDa and 13 kDa chains exist as a heterodimer. Post-translationally, the N-terminus of choline O-acetyltransferase 67 kDa and 54 kDa chains are blocked.

It carries out the reaction choline + acetyl-CoA = acetylcholine + CoA. Catalyzes the reversible synthesis of acetylcholine (ACh) from acetyl CoA and choline at cholinergic synapses. This chain is Choline O-acetyltransferase, found in Drosophila melanogaster (Fruit fly).